We begin with the raw amino-acid sequence, 198 residues long: MTNYPQLNKEIQDNEIKVAMHTNKGDMTFKLFPDIAPKTVENFVTHAKNGYYDGITFHRVINDFMIQGGDPTATGMGGESIYGGSFEDEFSLEAFNLYGALSMANAGPNTNGSQFFVVQMKEVPESMVNQLVDGGWPEPIAKAYADNGGTPWLDQKHTVFGQLIEGEATLEDIANTKVGAQDKPVHDVVIESIDVEDK.

The region spanning 14–195 is the PPIase cyclophilin-type domain; it reads NEIKVAMHTN…HDVVIESIDV (182 aa).

The protein belongs to the cyclophilin-type PPIase family.

The enzyme catalyses [protein]-peptidylproline (omega=180) = [protein]-peptidylproline (omega=0). PPIases accelerate the folding of proteins. It catalyzes the cis-trans isomerization of proline imidic peptide bonds in oligopeptides. In Staphylococcus haemolyticus (strain JCSC1435), this protein is Putative peptidyl-prolyl cis-trans isomerase.